The chain runs to 157 residues: Transcription antitermination protein NusB (157 aa).

The protein belongs to the NusB family.

Its function is as follows. Involved in transcription antitermination. Required for transcription of ribosomal RNA (rRNA) genes. Binds specifically to the boxA antiterminator sequence of the ribosomal RNA (rrn) operons. The protein is Transcription antitermination protein NusB of Xylella fastidiosa (strain 9a5c).